Reading from the N-terminus, the 250-residue chain is Triosephosphate isomerase (250 aa).

9–11 (NWK) provides a ligand contact to substrate. The active-site Electrophile is His-96. Glu-168 functions as the Proton acceptor in the catalytic mechanism. Residues Gly-174, Ser-216, and 237–238 (GG) each bind substrate.

The protein belongs to the triosephosphate isomerase family. Homodimer.

The protein resides in the cytoplasm. It catalyses the reaction D-glyceraldehyde 3-phosphate = dihydroxyacetone phosphate. It functions in the pathway carbohydrate biosynthesis; gluconeogenesis. It participates in carbohydrate degradation; glycolysis; D-glyceraldehyde 3-phosphate from glycerone phosphate: step 1/1. Its function is as follows. Involved in the gluconeogenesis. Catalyzes stereospecifically the conversion of dihydroxyacetone phosphate (DHAP) to D-glyceraldehyde-3-phosphate (G3P). The polypeptide is Triosephosphate isomerase (Leptospira interrogans serogroup Icterohaemorrhagiae serovar copenhageni (strain Fiocruz L1-130)).